The chain runs to 238 residues: ATP synthase subunit a (238 aa).

Transmembrane regions (helical) follow at residues 35 to 55 (SNVI…TLAT), 61 to 81 (VPSG…SFVV), 94 to 114 (FLCA…VPGL), 128 to 148 (ALTV…AGYI), 151 to 171 (FMGP…ISHL), 190 to 210 (IVLV…MYFL), and 211 to 231 (FSLA…IYLK).

The protein belongs to the ATPase A chain family. In terms of assembly, F-type ATPases have 2 components, CF(1) - the catalytic core - and CF(0) - the membrane proton channel. CF(1) has five subunits: alpha(3), beta(3), gamma(1), delta(1), epsilon(1). CF(0) has three main subunits: a(1), b(2) and c(9-12). The alpha and beta chains form an alternating ring which encloses part of the gamma chain. CF(1) is attached to CF(0) by a central stalk formed by the gamma and epsilon chains, while a peripheral stalk is formed by the delta and b chains.

It localises to the cell inner membrane. In terms of biological role, key component of the proton channel; it plays a direct role in the translocation of protons across the membrane. This Solidesulfovibrio magneticus (strain ATCC 700980 / DSM 13731 / RS-1) (Desulfovibrio magneticus) protein is ATP synthase subunit a.